Consider the following 219-residue polypeptide: Octanoyltransferase (219 aa).

The region spanning serine 34–histidine 209 is the BPL/LPL catalytic domain. Substrate is bound by residues arginine 73–histidine 80, serine 140–glycine 142, and glycine 153–alanine 155. The active-site Acyl-thioester intermediate is cysteine 171.

It belongs to the LipB family.

The protein localises to the cytoplasm. It catalyses the reaction octanoyl-[ACP] + L-lysyl-[protein] = N(6)-octanoyl-L-lysyl-[protein] + holo-[ACP] + H(+). Its pathway is protein modification; protein lipoylation via endogenous pathway; protein N(6)-(lipoyl)lysine from octanoyl-[acyl-carrier-protein]: step 1/2. Its function is as follows. Catalyzes the transfer of endogenously produced octanoic acid from octanoyl-acyl-carrier-protein onto the lipoyl domains of lipoate-dependent enzymes. Lipoyl-ACP can also act as a substrate although octanoyl-ACP is likely to be the physiological substrate. This is Octanoyltransferase from Shewanella putrefaciens (strain CN-32 / ATCC BAA-453).